The following is a 311-amino-acid chain: p-hydroxybenzoic acid efflux pump subunit AaeA (311 aa).

The helical transmembrane segment at isoleucine 11 to phenylalanine 31 threads the bilayer.

It belongs to the membrane fusion protein (MFP) (TC 8.A.1) family.

The protein localises to the cell inner membrane. In terms of biological role, forms an efflux pump with AaeB. This is p-hydroxybenzoic acid efflux pump subunit AaeA from Serratia proteamaculans (strain 568).